We begin with the raw amino-acid sequence, 286 residues long: Release factor glutamine methyltransferase (286 aa).

S-adenosyl-L-methionine contacts are provided by Asp136 and Asn179. Substrate is bound at residue 179-182; it reads NPPY.

This sequence belongs to the protein N5-glutamine methyltransferase family. PrmC subfamily.

It carries out the reaction L-glutaminyl-[peptide chain release factor] + S-adenosyl-L-methionine = N(5)-methyl-L-glutaminyl-[peptide chain release factor] + S-adenosyl-L-homocysteine + H(+). Its function is as follows. Methylates the class 1 translation termination release factors RF1/PrfA and RF2/PrfB on the glutamine residue of the universally conserved GGQ motif. In Borreliella burgdorferi (strain ATCC 35210 / DSM 4680 / CIP 102532 / B31) (Borrelia burgdorferi), this protein is Release factor glutamine methyltransferase.